We begin with the raw amino-acid sequence, 397 residues long: Nuclear pore complex-interacting protein family member B2 (397 aa).

Residues 256–397 (NRMGHQPPPP…KLRTGHCTQA (142 aa)) form a disordered region. Positions 267 to 277 (QQHSITDNSLS) are enriched in polar residues. Residues 278–287 (LKTPPECLLT) are compositionally biased toward low complexity. Basic residues predominate over residues 382–391 (KRRRLSKLRT).

Belongs to the NPIP family.

The protein resides in the nucleus. The polypeptide is Nuclear pore complex-interacting protein family member B2 (Homo sapiens (Human)).